The chain runs to 120 residues: Spermidine export protein MdtJ (120 aa).

The next 4 membrane-spanning stretches (helical) occupy residues 1 to 21 (MFYW…TLSM), 31 to 51 (TGFI…AFAV), 54 to 74 (IALG…ITLF), and 81 to 101 (ESLS…IVLI).

It belongs to the drug/metabolite transporter (DMT) superfamily. Small multidrug resistance (SMR) (TC 2.A.7.1) family. MdtJ subfamily. As to quaternary structure, forms a complex with MdtI.

The protein resides in the cell inner membrane. Its function is as follows. Catalyzes the excretion of spermidine. This Klebsiella pneumoniae subsp. pneumoniae (strain ATCC 700721 / MGH 78578) protein is Spermidine export protein MdtJ.